Here is a 963-residue protein sequence, read N- to C-terminus: Glycine dehydrogenase (decarboxylating) (963 aa).

N6-(pyridoxal phosphate)lysine is present on Lys-710.

It belongs to the GcvP family. The glycine cleavage system is composed of four proteins: P, T, L and H. The cofactor is pyridoxal 5'-phosphate.

The enzyme catalyses N(6)-[(R)-lipoyl]-L-lysyl-[glycine-cleavage complex H protein] + glycine + H(+) = N(6)-[(R)-S(8)-aminomethyldihydrolipoyl]-L-lysyl-[glycine-cleavage complex H protein] + CO2. Its function is as follows. The glycine cleavage system catalyzes the degradation of glycine. The P protein binds the alpha-amino group of glycine through its pyridoxal phosphate cofactor; CO(2) is released and the remaining methylamine moiety is then transferred to the lipoamide cofactor of the H protein. The protein is Glycine dehydrogenase (decarboxylating) of Pseudoalteromonas translucida (strain TAC 125).